Here is a 1357-residue protein sequence, read N- to C-terminus: Regulator of V-ATPase in vacuolar membrane protein 1 (1357 aa).

8 WD repeats span residues 98–134 (HDDT…GVYQ), 142–182 (KQPK…GEQA), 190–239 (PHPK…KNHT), 384–423 (GHNK…HGVS), 431–470 (QTES…KEDS), 595–636 (INTG…LEYE), 638–679 (TFHN…YTNN), and 898–939 (QKSI…RIAY). The tract at residues 1243-1357 (GSPSASDIES…ITKNLLDDFV (115 aa)) is disordered. Phosphoserine is present on residues Ser1244 and Ser1248. Positions 1272 to 1288 (STSSNSLAQSSSSAPRS) are enriched in low complexity. A compositionally biased stretch (basic and acidic residues) spans 1320–1332 (SENRKDKLSKDIL).

Component of the RAVE complex composed of RAV1, RAV2 and CBF3D/SKP1. Within the complex, it interacts directly with RAV2 and CBF3D. Interacts with the V-ATPase V1 subunits VMA1, VMA2 and VMA8.

The protein resides in the endomembrane system. In terms of biological role, component of the RAVE complex, which is required for stable assembly of the vacuolar ATPase complex V-ATPase under many conditions. Required for transport between the early endosome and the late endosome/prevacuolar compartment (PVC), suggesting that assembly of vacuolar ATPase at the early endosome is required for transport from the early endosome to the PVC. The protein is Regulator of V-ATPase in vacuolar membrane protein 1 (RAV1) of Saccharomyces cerevisiae (strain ATCC 204508 / S288c) (Baker's yeast).